The sequence spans 206 residues: Peptidyl-tRNA hydrolase (206 aa).

A tRNA-binding site is contributed by Tyr-19. Catalysis depends on His-24, which acts as the Proton acceptor. TRNA-binding residues include Phe-70, Asn-72, and Asn-118.

It belongs to the PTH family. In terms of assembly, monomer.

It localises to the cytoplasm. It carries out the reaction an N-acyl-L-alpha-aminoacyl-tRNA + H2O = an N-acyl-L-amino acid + a tRNA + H(+). Functionally, hydrolyzes ribosome-free peptidyl-tRNAs (with 1 or more amino acids incorporated), which drop off the ribosome during protein synthesis, or as a result of ribosome stalling. In terms of biological role, catalyzes the release of premature peptidyl moieties from peptidyl-tRNA molecules trapped in stalled 50S ribosomal subunits, and thus maintains levels of free tRNAs and 50S ribosomes. This Synechococcus sp. (strain CC9902) protein is Peptidyl-tRNA hydrolase.